The primary structure comprises 424 residues: Serine--tRNA ligase (424 aa).

An L-serine-binding site is contributed by 233–235; that stretch reads TAE. ATP is bound by residues 264–266 and Val-280; that span reads RRE. Glu-287 provides a ligand contact to L-serine. 351 to 354 is a binding site for ATP; it reads EISS. Ser-386 lines the L-serine pocket.

The protein belongs to the class-II aminoacyl-tRNA synthetase family. Type-1 seryl-tRNA synthetase subfamily. Homodimer. The tRNA molecule binds across the dimer.

Its subcellular location is the cytoplasm. The enzyme catalyses tRNA(Ser) + L-serine + ATP = L-seryl-tRNA(Ser) + AMP + diphosphate + H(+). It carries out the reaction tRNA(Sec) + L-serine + ATP = L-seryl-tRNA(Sec) + AMP + diphosphate + H(+). It functions in the pathway aminoacyl-tRNA biosynthesis; selenocysteinyl-tRNA(Sec) biosynthesis; L-seryl-tRNA(Sec) from L-serine and tRNA(Sec): step 1/1. Catalyzes the attachment of serine to tRNA(Ser). Is also able to aminoacylate tRNA(Sec) with serine, to form the misacylated tRNA L-seryl-tRNA(Sec), which will be further converted into selenocysteinyl-tRNA(Sec). In Kosmotoga olearia (strain ATCC BAA-1733 / DSM 21960 / TBF 19.5.1), this protein is Serine--tRNA ligase.